Here is a 418-residue protein sequence, read N- to C-terminus: Adenylosuccinate synthetase 2 (418 aa).

GTP-binding positions include 12-18 (GDEGKGR) and 40-42 (GHT). Asp13 acts as the Proton acceptor in catalysis. Asp13 and Gly40 together coordinate Mg(2+). IMP is bound by residues 13-16 (DEGK), 38-41 (NAGH), Thr127, Lys141, Thr239, and Arg301. His41 serves as the catalytic Proton donor. Residue 297–303 (AVTGRPR) coordinates substrate. GTP-binding positions include Arg303, 329–331 (KID), and 407–409 (SVG).

It belongs to the adenylosuccinate synthetase family. In terms of assembly, homodimer. It depends on Mg(2+) as a cofactor.

It is found in the cytoplasm. It catalyses the reaction IMP + L-aspartate + GTP = N(6)-(1,2-dicarboxyethyl)-AMP + GDP + phosphate + 2 H(+). Its pathway is purine metabolism; AMP biosynthesis via de novo pathway; AMP from IMP: step 1/2. Its function is as follows. Plays an important role in the de novo pathway of purine nucleotide biosynthesis. Catalyzes the first committed step in the biosynthesis of AMP from IMP. The polypeptide is Adenylosuccinate synthetase 2 (Pseudoalteromonas translucida (strain TAC 125)).